Reading from the N-terminus, the 334-residue chain is Anthranilate phosphoribosyltransferase (334 aa).

5-phospho-alpha-D-ribose 1-diphosphate contacts are provided by residues Gly-79, 82–83 (GD), Ser-87, 89–92 (NIST), 107–115 (KHGNRSISS), and Ser-119. Gly-79 contacts anthranilate. Ser-91 lines the Mg(2+) pocket. Position 110 (Asn-110) interacts with anthranilate. Residue Arg-165 participates in anthranilate binding. Residues Asp-224 and Glu-225 each coordinate Mg(2+).

This sequence belongs to the anthranilate phosphoribosyltransferase family. As to quaternary structure, homodimer. Mg(2+) serves as cofactor.

It catalyses the reaction N-(5-phospho-beta-D-ribosyl)anthranilate + diphosphate = 5-phospho-alpha-D-ribose 1-diphosphate + anthranilate. Its pathway is amino-acid biosynthesis; L-tryptophan biosynthesis; L-tryptophan from chorismate: step 2/5. Its function is as follows. Catalyzes the transfer of the phosphoribosyl group of 5-phosphorylribose-1-pyrophosphate (PRPP) to anthranilate to yield N-(5'-phosphoribosyl)-anthranilate (PRA). The polypeptide is Anthranilate phosphoribosyltransferase (Streptococcus sanguinis (strain SK36)).